We begin with the raw amino-acid sequence, 201 residues long: CASP-like protein 2D1 (201 aa).

Residues 1 to 26 (MRSGEGSTAAAAAAEEEKVKVAAPFR) are Cytoplasmic-facing. The chain crosses the membrane as a helical span at residues 27 to 47 (LAELGLRVCAVPLAVASVWEM). Residues 48 to 70 (ATNKQVDETYGEVRFSDLSGFRY) lie on the Extracellular side of the membrane. The helical transmembrane segment at 71–91 (LVWINAITAAYSVASILLSSC) threads the bilayer. Topologically, residues 92 to 98 (RFITRFD) are cytoplasmic. A helical transmembrane segment spans residues 99-119 (WLIFILDQASAYLLLTSASAA). The Extracellular portion of the chain corresponds to 120–148 (AEVVYLAREGDREVSWGEVCSYFGRFCGA). Residues 149–169 (ATVSVALNAAALLCFMALSLI) form a helical membrane-spanning segment. Residues 170–201 (SAFRVFTKFNPPSQSNSKQQLSQEQGKPVVSG) lie on the Cytoplasmic side of the membrane. Over residues 180–194 (PPSQSNSKQQLSQEQ) the composition is skewed to polar residues. Residues 180-201 (PPSQSNSKQQLSQEQGKPVVSG) are disordered.

It belongs to the Casparian strip membrane proteins (CASP) family. As to quaternary structure, homodimer and heterodimers.

It is found in the cell membrane. In Oryza sativa subsp. indica (Rice), this protein is CASP-like protein 2D1.